The chain runs to 391 residues: MGEENQPNYTISQENWSLHRKGYDDQQRHQEKVQEAIKNNLPDLVTEESIVMSNGKDVVKIPIRSLDEYKIRYNYDKNKHVGQGNGDSKVGDVVARDGSGGQKQKGPGKGQGAGDAAGEDYYEAEVSILELEQAFFKELELPNLKRKEMDENRIEHVEFNDIRKTGLWGNIDKKRTMISAYKRNAMRGKASFHPIHQEDLKFRTWNEVLKPDSKAVVLAMMDTSGSMGIWEKYMARSFFFWMTRFLRTKYETVDIEFIAHHTEAKVVPEEEFFSKGESGGTICSSVYKKALELIDNKYSPDRYNIYPFHFSDGDNLTSDNARCVKLVEELMKKCNMFGYGEVNQYNRHSTLMSAYKNIKDENFRYYILKQKADVFHAMKSFFREESGEKMA.

Over residues 1–16 (MGEENQPNYTISQENW) the composition is skewed to polar residues. 2 disordered regions span residues 1 to 31 (MGEENQPNYTISQENWSLHRKGYDDQQRHQE) and 80 to 117 (HVGQGNGDSKVGDVVARDGSGGQKQKGPGKGQGAGDAA). A compositionally biased stretch (basic and acidic residues) spans 21–31 (KGYDDQQRHQE). Residues 98–115 (GSGGQKQKGPGKGQGAGD) show a composition bias toward gly residues.

It belongs to the UPF0229 family.

This Bacillus anthracis (strain A0248) protein is UPF0229 protein BAA_0633.